A 255-amino-acid polypeptide reads, in one-letter code: MVLSSKNDQPDHLFAAPIEKLGDWAFDEQVAAVFPNMITRSIPGYTNIITMIGMLSKRFVKPHTQIYDLGCSHGAACLSIYPNILDIPSCKIIAVEESPAMIKYCRENLMAHCDQIPIEIIEDDILNIKIDNASMVILNFTLQFLDPGHRENVLNRIYQGLNPGGILVLSEKFHFEDPDIGPLLFDMHHDFKRAHGYSDLEISQKSTMLKNVMRIDSVETHQNRLRQAGFEQMDLWFQCFNFGSLLALKTSSSND.

S-adenosyl-L-methionine contacts are provided by residues Tyr45, 70 to 72, 124 to 125, and Asn139; these read GCS and DI.

The protein belongs to the class I-like SAM-binding methyltransferase superfamily. Cx-SAM synthase family. In terms of assembly, homodimer.

It carries out the reaction prephenate + S-adenosyl-L-methionine = carboxy-S-adenosyl-L-methionine + 3-phenylpyruvate + H2O. Functionally, catalyzes the conversion of S-adenosyl-L-methionine (SAM) to carboxy-S-adenosyl-L-methionine (Cx-SAM). This chain is Carboxy-S-adenosyl-L-methionine synthase, found in Hamiltonella defensa subsp. Acyrthosiphon pisum (strain 5AT).